We begin with the raw amino-acid sequence, 151 residues long: Exosporium protein B (151 aa).

It is found in the spore wall. The chain is Exosporium protein B from Clostridium sporogenes (strain ATCC 15579).